Consider the following 559-residue polypeptide: uncharacterized protein (559 aa).

Over residues 1–10 (MSGRRGDHPG) the composition is skewed to basic and acidic residues. Residues 1–76 (MSGRRGDHPG…ERSRVPPRTT (76 aa)) are disordered. Transmembrane regions (helical) follow at residues 128-148 (FAVDSAMAVALANTLFFAAAS), 155-175 (VALYLLITIAPFAVIAPLIGP), 186-206 (VALALSFGLRTALAVVLIMNY), 208-228 (GATGSFPSWVLYPCALAMMVF), 259-279 (VFGLLGGTIAGGAIAAGVEFV), 283-303 (LFQLPGALFVVVAITIAGASL), 358-378 (LWGNCTIKVMVGFLFLYPAFV), 387-407 (WVQLGMLGLIGAAAAVGNFAG), 428-448 (VLVTVLAIAAAVAGSLAATAI), 490-510 (LAWVLGGAVGVLVYTELWVGF), and 515-535 (ALLILGLAQTIVSFRGDSLIP).

This sequence to M.leprae ML2143.

The protein resides in the cell membrane. This is an uncharacterized protein from Mycobacterium tuberculosis (strain CDC 1551 / Oshkosh).